The sequence spans 466 residues: Soluble pyridine nucleotide transhydrogenase (466 aa).

36–45 (ERYHNVGGGC) lines the FAD pocket.

It belongs to the class-I pyridine nucleotide-disulfide oxidoreductase family. It depends on FAD as a cofactor.

Its subcellular location is the cytoplasm. The catalysed reaction is NAD(+) + NADPH = NADH + NADP(+). Functionally, conversion of NADPH, generated by peripheral catabolic pathways, to NADH, which can enter the respiratory chain for energy generation. The polypeptide is Soluble pyridine nucleotide transhydrogenase (Salmonella paratyphi A (strain ATCC 9150 / SARB42)).